A 214-amino-acid chain; its full sequence is Adenylate kinase (214 aa).

ATP is bound at residue 12–17; sequence GVGKGT. The interval 32–61 is NMP; the sequence is STGNIFRSQIASNSELGIKLKEIVESGGYV. AMP-binding positions include Thr33, Arg38, 59 to 61, 88 to 91, and Gln95; these read GYV and GYPR. The interval 126–163 is LID; it reads GRRICPSCNAQYHIYFKKSKLDTKCEIDQSELIQRKDD. An ATP-binding site is contributed by Arg127. Zn(2+) contacts are provided by Cys130, Cys133, Cys150, and Asp153. Arg160 and Arg171 together coordinate AMP. Lys199 is an ATP binding site.

The protein belongs to the adenylate kinase family. In terms of assembly, monomer.

It localises to the cytoplasm. The catalysed reaction is AMP + ATP = 2 ADP. Its pathway is purine metabolism; AMP biosynthesis via salvage pathway; AMP from ADP: step 1/1. Functionally, catalyzes the reversible transfer of the terminal phosphate group between ATP and AMP. Plays an important role in cellular energy homeostasis and in adenine nucleotide metabolism. In Mycoplasmopsis pulmonis (strain UAB CTIP) (Mycoplasma pulmonis), this protein is Adenylate kinase.